Consider the following 478-residue polypeptide: Glycogen synthase (478 aa).

Residue lysine 15 coordinates ADP-alpha-D-glucose.

This sequence belongs to the glycosyltransferase 1 family. Bacterial/plant glycogen synthase subfamily.

It carries out the reaction [(1-&gt;4)-alpha-D-glucosyl](n) + ADP-alpha-D-glucose = [(1-&gt;4)-alpha-D-glucosyl](n+1) + ADP + H(+). Its pathway is glycan biosynthesis; glycogen biosynthesis. Functionally, synthesizes alpha-1,4-glucan chains using ADP-glucose. The polypeptide is Glycogen synthase (Lactococcus lactis subsp. lactis (strain IL1403) (Streptococcus lactis)).